Here is a 170-residue protein sequence, read N- to C-terminus: MDLKRFIRDIPDFPQKGIVFRDITPLLRNQEAFKEAIDRMCELVSDRDFDLVVAPEARGFILGATMAYKLGKGFVPVRKPGKLPYKTVYEEYQLEYGTERLHIHEDAVEKGQRVLIVDDVLATGGTAEALIRLVKKLGGEVVSLAFLVELSYLEPRKRLKSYDIKTLIVY.

The protein belongs to the purine/pyrimidine phosphoribosyltransferase family. As to quaternary structure, homodimer.

The protein resides in the cytoplasm. The enzyme catalyses AMP + diphosphate = 5-phospho-alpha-D-ribose 1-diphosphate + adenine. It functions in the pathway purine metabolism; AMP biosynthesis via salvage pathway; AMP from adenine: step 1/1. Catalyzes a salvage reaction resulting in the formation of AMP, that is energically less costly than de novo synthesis. The chain is Adenine phosphoribosyltransferase from Thermotoga petrophila (strain ATCC BAA-488 / DSM 13995 / JCM 10881 / RKU-1).